Here is a 1296-residue protein sequence, read N- to C-terminus: DNA-directed RNA polymerase subunit beta' (1296 aa).

Zn(2+) contacts are provided by cysteine 60, cysteine 62, cysteine 75, and cysteine 78. Basic and acidic residues predominate over residues 185–202; that stretch reads EEEGGKAAEKRKLRDSAD. Positions 185–204 are disordered; sequence EEEGGKAAEKRKLRDSADRQ. The Mg(2+) site is built by aspartate 535, aspartate 537, and aspartate 539. Zn(2+)-binding residues include cysteine 877, cysteine 954, cysteine 961, and cysteine 964.

It belongs to the RNA polymerase beta' chain family. The RNAP catalytic core consists of 2 alpha, 1 beta, 1 beta' and 1 omega subunit. When a sigma factor is associated with the core the holoenzyme is formed, which can initiate transcription. Mg(2+) serves as cofactor. It depends on Zn(2+) as a cofactor.

It catalyses the reaction RNA(n) + a ribonucleoside 5'-triphosphate = RNA(n+1) + diphosphate. Its function is as follows. DNA-dependent RNA polymerase catalyzes the transcription of DNA into RNA using the four ribonucleoside triphosphates as substrates. In Kocuria rhizophila (strain ATCC 9341 / DSM 348 / NBRC 103217 / DC2201), this protein is DNA-directed RNA polymerase subunit beta'.